Reading from the N-terminus, the 225-residue chain is Small ribosomal subunit protein eS1 (225 aa).

A compositionally biased stretch (acidic residues) spans Pro206–Ala216. The tract at residues Pro206–Glu225 is disordered.

The protein belongs to the eukaryotic ribosomal protein eS1 family.

The sequence is that of Small ribosomal subunit protein eS1 from Methanococcus maripaludis (strain C5 / ATCC BAA-1333).